We begin with the raw amino-acid sequence, 100 residues long: Small ribosomal subunit protein uS14c (100 aa).

The protein belongs to the universal ribosomal protein uS14 family. In terms of assembly, part of the 30S ribosomal subunit.

Its subcellular location is the plastid. The protein localises to the chloroplast. Functionally, binds 16S rRNA, required for the assembly of 30S particles. The chain is Small ribosomal subunit protein uS14c from Carica papaya (Papaya).